A 461-amino-acid polypeptide reads, in one-letter code: Arginine biosynthesis bifunctional protein ArgJ, chloroplastic (461 aa).

Substrate is bound by residues T202, K228, T239, E326, N456, and T461. T239 serves as the catalytic Nucleophile.

It belongs to the ArgJ family. Heterodimer of an alpha and a beta chain.

The protein localises to the plastid. It localises to the chloroplast. The catalysed reaction is N(2)-acetyl-L-ornithine + L-glutamate = N-acetyl-L-glutamate + L-ornithine. It catalyses the reaction L-glutamate + acetyl-CoA = N-acetyl-L-glutamate + CoA + H(+). The protein operates within amino-acid biosynthesis; L-arginine biosynthesis; L-ornithine and N-acetyl-L-glutamate from L-glutamate and N(2)-acetyl-L-ornithine (cyclic): step 1/1. It functions in the pathway amino-acid biosynthesis; L-arginine biosynthesis; N(2)-acetyl-L-ornithine from L-glutamate: step 1/4. Catalyzes two activities which are involved in the cyclic version of arginine biosynthesis: the synthesis of acetylglutamate from glutamate and acetyl-CoA, and of ornithine by transacetylation between acetylornithine and glutamate. The chain is Arginine biosynthesis bifunctional protein ArgJ, chloroplastic from Ostreococcus lucimarinus (strain CCE9901).